The primary structure comprises 235 residues: Sugar fermentation stimulation protein homolog (235 aa).

The protein belongs to the SfsA family.

The chain is Sugar fermentation stimulation protein homolog from Alkaliphilus oremlandii (strain OhILAs) (Clostridium oremlandii (strain OhILAs)).